The primary structure comprises 124 residues: Large ribosomal subunit protein bL12 (124 aa).

Residues 93–124 (GAPSTVKEGASKDEAEEAKKKLEEAGASVELK) form a disordered region. The span at 101–116 (GASKDEAEEAKKKLEE) shows a compositional bias: basic and acidic residues.

The protein belongs to the bacterial ribosomal protein bL12 family. In terms of assembly, homodimer. Part of the ribosomal stalk of the 50S ribosomal subunit. Forms a multimeric L10(L12)X complex, where L10 forms an elongated spine to which 2 to 4 L12 dimers bind in a sequential fashion. Binds GTP-bound translation factors.

Its function is as follows. Forms part of the ribosomal stalk which helps the ribosome interact with GTP-bound translation factors. Is thus essential for accurate translation. The sequence is that of Large ribosomal subunit protein bL12 from Marinobacter nauticus (strain ATCC 700491 / DSM 11845 / VT8) (Marinobacter aquaeolei).